A 294-amino-acid chain; its full sequence is Golgi phosphoprotein 3 homolog sauron (294 aa).

Residues 1–52 (MNRSDGLVRRSVKPRENGGAEGGLNANTPDDNQDALDNLKDQEDNIDDGDSK) form a disordered region. Residues 37-52 (DNLKDQEDNIDDGDSK) are compositionally biased toward basic and acidic residues. Residues Trp-77, Arg-86, Lys-167, and Arg-170 each coordinate a 1,2-diacyl-sn-glycero-3-phospho-(1D-myo-inositol 4-phosphate). Positions 186–197 (EKQNFLLFDMTT) are beta-hairpin required for oligomerization.

It belongs to the GOLPH3/VPS74 family. As to quaternary structure, homooligomer. Interacts with botv, Ext2 and ttv. Interacts with Vti1. Interacts with Vps35, Rab5, Chc, Rab11, zip, Pav and Septin1.

The protein resides in the golgi apparatus membrane. The protein localises to the cytoplasmic vesicle. Its subcellular location is the cleavage furrow. Its function is as follows. Phosphatidylinositol-4-phosphate-binding protein that links Golgi membranes to the cytoskeleton and may participate in the tensile force required for vesicle budding from the Golgi. Thereby, may play a role in Golgi membrane trafficking and could indirectly give its flattened shape to the Golgi apparatus. May also bind to the coatomer to regulate Golgi membrane trafficking. May play a role in anterograde transport from the Golgi to the plasma membrane and regulate secretion. Also involved in the control of the localization of Golgi enzymes through interaction with their cytoplasmic part. Functions in cytokinesis by regulating contractile ring formation and vesicle trafficking during cleavage furrow ingression. May also have a role in the intital steps of central spindle formation. Can also bind phosphatidylinositol-3-phosphate and phosphatidylinositol-5-phosphate in vitro. The sequence is that of Golgi phosphoprotein 3 homolog sauron from Drosophila melanogaster (Fruit fly).